Consider the following 342-residue polypeptide: D-erythrose-4-phosphate dehydrogenase (342 aa).

12–13 (RI) contributes to the NAD(+) binding site. Residues 154–156 (SCT), Arg200, 213–214 (TK), and Arg236 each bind substrate. Cys155 serves as the catalytic Nucleophile. Asn318 is an NAD(+) binding site.

This sequence belongs to the glyceraldehyde-3-phosphate dehydrogenase family. Epd subfamily. Homotetramer.

The protein resides in the cytoplasm. The catalysed reaction is D-erythrose 4-phosphate + NAD(+) + H2O = 4-phospho-D-erythronate + NADH + 2 H(+). Its pathway is cofactor biosynthesis; pyridoxine 5'-phosphate biosynthesis; pyridoxine 5'-phosphate from D-erythrose 4-phosphate: step 1/5. Its function is as follows. Catalyzes the NAD-dependent conversion of D-erythrose 4-phosphate to 4-phosphoerythronate. This Salmonella arizonae (strain ATCC BAA-731 / CDC346-86 / RSK2980) protein is D-erythrose-4-phosphate dehydrogenase.